The chain runs to 638 residues: Threonine--tRNA ligase (638 aa).

Positions 1–61 constitute a TGS domain; the sequence is MPNITLPDGS…EADTPLAIVT (61 aa). The tract at residues 242–533 is catalytic; sequence DHRKLGRLLD…LIEHYAGALP (292 aa). Residues C333, H384, and H510 each contribute to the Zn(2+) site.

This sequence belongs to the class-II aminoacyl-tRNA synthetase family. In terms of assembly, homodimer. It depends on Zn(2+) as a cofactor.

It localises to the cytoplasm. It catalyses the reaction tRNA(Thr) + L-threonine + ATP = L-threonyl-tRNA(Thr) + AMP + diphosphate + H(+). In terms of biological role, catalyzes the attachment of threonine to tRNA(Thr) in a two-step reaction: L-threonine is first activated by ATP to form Thr-AMP and then transferred to the acceptor end of tRNA(Thr). Also edits incorrectly charged L-seryl-tRNA(Thr). This chain is Threonine--tRNA ligase, found in Aromatoleum aromaticum (strain DSM 19018 / LMG 30748 / EbN1) (Azoarcus sp. (strain EbN1)).